Here is a 511-residue protein sequence, read N- to C-terminus: 2-isopropylmalate synthase (511 aa).

The 263-residue stretch at 4–266 (IDIFDTTLRD…ETGIQLQEIK (263 aa)) folds into the Pyruvate carboxyltransferase domain. Mn(2+)-binding residues include Asp-13, His-201, His-203, and Asn-237. Positions 392-511 (ELKMVQVQYG…IKESLRAHPV (120 aa)) are regulatory domain.

It belongs to the alpha-IPM synthase/homocitrate synthase family. LeuA type 1 subfamily. In terms of assembly, homodimer. Mn(2+) serves as cofactor.

The protein localises to the cytoplasm. It carries out the reaction 3-methyl-2-oxobutanoate + acetyl-CoA + H2O = (2S)-2-isopropylmalate + CoA + H(+). The protein operates within amino-acid biosynthesis; L-leucine biosynthesis; L-leucine from 3-methyl-2-oxobutanoate: step 1/4. In terms of biological role, catalyzes the condensation of the acetyl group of acetyl-CoA with 3-methyl-2-oxobutanoate (2-ketoisovalerate) to form 3-carboxy-3-hydroxy-4-methylpentanoate (2-isopropylmalate). This is 2-isopropylmalate synthase from Lysinibacillus sphaericus (strain C3-41).